The primary structure comprises 282 residues: uncharacterized protein (282 aa).

Positions 205 to 277 (LAQQRRVYAQ…DELQNKARDA (73 aa)) form a coiled coil.

This is an uncharacterized protein from Treponema pallidum (strain Nichols).